The following is a 278-amino-acid chain: Tryptophan synthase alpha chain (278 aa).

Residues Glu50 and Asp61 each act as proton acceptor in the active site.

Belongs to the TrpA family. Tetramer of two alpha and two beta chains.

It catalyses the reaction (1S,2R)-1-C-(indol-3-yl)glycerol 3-phosphate + L-serine = D-glyceraldehyde 3-phosphate + L-tryptophan + H2O. The protein operates within amino-acid biosynthesis; L-tryptophan biosynthesis; L-tryptophan from chorismate: step 5/5. In terms of biological role, the alpha subunit is responsible for the aldol cleavage of indoleglycerol phosphate to indole and glyceraldehyde 3-phosphate. The sequence is that of Tryptophan synthase alpha chain from Rhodopseudomonas palustris (strain BisA53).